Here is a 397-residue protein sequence, read N- to C-terminus: Acetate kinase 1 (397 aa).

Asparagine 8 is a Mg(2+) binding site. Lysine 15 serves as a coordination point for ATP. Arginine 89 provides a ligand contact to substrate. The active-site Proton donor/acceptor is aspartate 146. Residues 206–210, 281–283, and 329–333 contribute to the ATP site; these read HLGNG, DFR, and GVGEN. Residue glutamate 380 participates in Mg(2+) binding.

This sequence belongs to the acetokinase family. As to quaternary structure, homodimer. Requires Mg(2+) as cofactor. Mn(2+) serves as cofactor.

It is found in the cytoplasm. The enzyme catalyses acetate + ATP = acetyl phosphate + ADP. The protein operates within metabolic intermediate biosynthesis; acetyl-CoA biosynthesis; acetyl-CoA from acetate: step 1/2. Its function is as follows. Catalyzes the formation of acetyl phosphate from acetate and ATP. Can also catalyze the reverse reaction. The chain is Acetate kinase 1 from Listeria monocytogenes serotype 4b (strain F2365).